The primary structure comprises 1370 residues: DNA-directed RNA polymerase subunit beta (1370 aa).

It belongs to the RNA polymerase beta chain family. The RNAP catalytic core consists of 2 alpha, 1 beta, 1 beta' and 1 omega subunit. When a sigma factor is associated with the core the holoenzyme is formed, which can initiate transcription.

The enzyme catalyses RNA(n) + a ribonucleoside 5'-triphosphate = RNA(n+1) + diphosphate. In terms of biological role, DNA-dependent RNA polymerase catalyzes the transcription of DNA into RNA using the four ribonucleoside triphosphates as substrates. The sequence is that of DNA-directed RNA polymerase subunit beta from Geobacter sulfurreducens (strain ATCC 51573 / DSM 12127 / PCA).